The sequence spans 424 residues: Glutamyl-tRNA reductase (424 aa).

Residues 53-56 (TCNR), S111, 116-118 (EPQ), and Q122 contribute to the substrate site. C54 serves as the catalytic Nucleophile. 191–196 (GAGEMI) lines the NADP(+) pocket.

It belongs to the glutamyl-tRNA reductase family. In terms of assembly, homodimer.

It catalyses the reaction (S)-4-amino-5-oxopentanoate + tRNA(Glu) + NADP(+) = L-glutamyl-tRNA(Glu) + NADPH + H(+). It functions in the pathway porphyrin-containing compound metabolism; protoporphyrin-IX biosynthesis; 5-aminolevulinate from L-glutamyl-tRNA(Glu): step 1/2. Its function is as follows. Catalyzes the NADPH-dependent reduction of glutamyl-tRNA(Glu) to glutamate 1-semialdehyde (GSA). In Bordetella avium (strain 197N), this protein is Glutamyl-tRNA reductase.